The primary structure comprises 929 residues: Isoleucine--tRNA ligase (929 aa).

The short motif at 57 to 67 (PYANGNIHVGH) is the 'HIGH' region element. Glutamate 554 is a binding site for L-isoleucyl-5'-AMP. The 'KMSKS' region motif lies at 595 to 599 (KMSKS). ATP is bound at residue lysine 598. Positions 888, 891, 908, and 911 each coordinate Zn(2+).

The protein belongs to the class-I aminoacyl-tRNA synthetase family. IleS type 1 subfamily. As to quaternary structure, monomer. The cofactor is Zn(2+).

The protein resides in the cytoplasm. The catalysed reaction is tRNA(Ile) + L-isoleucine + ATP = L-isoleucyl-tRNA(Ile) + AMP + diphosphate. In terms of biological role, catalyzes the attachment of isoleucine to tRNA(Ile). As IleRS can inadvertently accommodate and process structurally similar amino acids such as valine, to avoid such errors it has two additional distinct tRNA(Ile)-dependent editing activities. One activity is designated as 'pretransfer' editing and involves the hydrolysis of activated Val-AMP. The other activity is designated 'posttransfer' editing and involves deacylation of mischarged Val-tRNA(Ile). The sequence is that of Isoleucine--tRNA ligase from Streptococcus thermophilus (strain CNRZ 1066).